Here is a 225-residue protein sequence, read N- to C-terminus: MVGFTPVALAALAATGALAFPAGNATELEKRQTTPNSEGWHDGYYYSWWSDGGAQATYTNLEGGTYEISWGDGGNLVGGKGWNPGLNARAIHFEGVYQPNGNSYLAVYGWTRNPLVEYYIVENFGTYDPSSGATDLGTVECDGSIYRLGKTTRVNAPSIDGTQTFDQYWSVRQDKRTSGTVQTGCHFDAWARAGLNVNGDHYYQIVATEGYFSSGYARITVADVG.

Positions 1 to 31 are cleaved as a signal peptide; the sequence is MVGFTPVALAALAATGALAFPAGNATELEKR. Gln32 is subject to Pyrrolidone carboxylic acid. The GH11 domain maps to 32–222; the sequence is QTTPNSEGWH…SSGYARITVA (191 aa). Glu117 serves as the catalytic Nucleophile. A disulfide bond links Cys141 and Cys185. Glu209 functions as the Proton donor in the catalytic mechanism.

It catalyses the reaction Endohydrolysis of (1-&gt;4)-beta-D-xylosidic linkages in xylans.. The protein operates within glycan degradation; xylan degradation. The polypeptide is Endo-1,4-beta-xylanase (XYNA) (Thermomyces lanuginosus (Humicola lanuginosa)).